We begin with the raw amino-acid sequence, 124 residues long: UPF0102 protein PP_1324 (124 aa).

The protein belongs to the UPF0102 family.

The protein is UPF0102 protein PP_1324 of Pseudomonas putida (strain ATCC 47054 / DSM 6125 / CFBP 8728 / NCIMB 11950 / KT2440).